Reading from the N-terminus, the 329-residue chain is Transmembrane protein I329L (329 aa).

A signal peptide spans 1-31 (MLRVFIFFVFLGSGLAGRIKPQITCKYFISE). 6 N-linked (GlcNAc...) asparagine; by host glycosylation sites follow: N32, N39, N44, N76, N82, and N101. Over 32–239 (NNTWYKYNVT…NTERYKNCYP (208 aa)) the chain is Extracellular. The stretch at 112-133 (ELKFLDLRYNNLQFIDYNILRK) is one LRR repeat. Residues N185 and N219 are each glycosylated (N-linked (GlcNAc...) asparagine; by host). Cysteines 195 and 237 form a disulfide. A helical transmembrane segment spans residues 240 to 260 (FVLVSILCSCISFLFLIICLL). Residues 261–329 (RSICKKYSCT…EKKASCSRRK (69 aa)) lie on the Cytoplasmic side of the membrane.

It belongs to the asfivirus I329L family. Post-translationally, highly glycosylated.

Its subcellular location is the host endoplasmic reticulum membrane. It localises to the host Golgi apparatus membrane. Functionally, viral TLR3 homolog that probably prevents TLR3 dimerization and subsequent induction of IFN. Inhibits dsRNA-stimulated activation of NF-kB and IRF3. In Ornithodoros (relapsing fever ticks), this protein is Transmembrane protein I329L.